Reading from the N-terminus, the 312-residue chain is NADPH-dependent alpha-keto amide reductase (312 aa).

Residues Gly25, Thr26, Arg27, and Asp59 each contribute to the NADPH site. Active-site proton donor residues include Tyr64 and His122. Phosphoserine is present on Ser123. NADPH is bound by residues Ser157, Gln179, Ser208, Leu210, Thr257, Thr258, Ser259, Ser260, Lys261, and Arg264.

This sequence belongs to the aldo/keto reductase family. In terms of assembly, monomer. The N-terminus is blocked.

It is found in the cytoplasm. It localises to the nucleus. Reduces aromatic alpha-keto amides, aliphatic and aromatic alpha-keto esters, but not beta-keto esters. This is NADPH-dependent alpha-keto amide reductase from Saccharomyces cerevisiae (strain ATCC 204508 / S288c) (Baker's yeast).